A 414-amino-acid polypeptide reads, in one-letter code: Ornithine aminotransferase (414 aa).

Cysteine 154 and cysteine 163 are oxidised to a cystine. Lysine 262 carries the post-translational modification N6-(pyridoxal phosphate)lysine.

It belongs to the class-III pyridoxal-phosphate-dependent aminotransferase family. In terms of assembly, homodimer. Requires pyridoxal 5'-phosphate as cofactor. The disulfide bond between Cys-154 and Cys-163 is reduced by TRX1 which increases OAT catalytic activity.

It localises to the cytoplasm. It catalyses the reaction a 2-oxocarboxylate + L-ornithine = L-glutamate 5-semialdehyde + an L-alpha-amino acid. The enzyme catalyses L-ornithine + 2-oxoglutarate = L-glutamate 5-semialdehyde + L-glutamate. The protein operates within amino-acid biosynthesis; L-proline biosynthesis; L-glutamate 5-semialdehyde from L-ornithine: step 1/1. Its activity is regulated as follows. Unlike for mammalian OATs, activity is increased by TRX1-mediated reduction of the disulfide bond between Cys-154 and Cys-163. Binding to TRX1 may also induce conformational changes that facilitate substrate binding. Its function is as follows. Catalyzes the transamination of alpha-ketoglutarate with ornithine or N-acetylornithine and of glutamate-5-semialdehyde with glutamate and alanine. The chain is Ornithine aminotransferase from Plasmodium yoelii yoelii.